A 409-amino-acid chain; its full sequence is Runt-related transcription factor 3 (409 aa).

Disordered regions lie at residues 1–51, 177–248, and 346–409; these read MRIP…RTRP, GPRE…QFDR, and AGGG…WRPY. Polar residues predominate over residues 7–17; that stretch reads PSTSRRFTPPS. Positions 55–183 constitute a Runt domain; the sequence is SMVDVLADHA…TVDGPREPRR (129 aa). A compositionally biased stretch (basic and acidic residues) spans 187–204; sequence KIEDQTKAFPDRFGDLRM. Lys193 participates in a covalent cross-link: Glycyl lysine isopeptide (Lys-Gly) (interchain with G-Cter in SUMO2). Positions 207-238 are enriched in polar residues; sequence TPSTPSPRGSLSTTSHFSSQAQTPIQGSSDLN. At Ser241 the chain carries Phosphoserine. 2 stretches are compositionally biased toward polar residues: residues 355-376 and 387-396; these read RMLT…NPSL and SHSNSPTALS. The segment covering 400–409 has biased composition (basic and acidic residues); the sequence is RMDEAVWRPY.

As to quaternary structure, heterodimer with CBFB. RUNX3 binds DNA as a monomer and through the Runt domain. DNA-binding is increased by heterodimerization. Interacts with TLE1 and SUV39H1. The tyrosine phosphorylated form (via runt domain) interacts with SRC (via protein kinase domain). Interacts with FYN and LCK. Interacts with FOXP3. Interacts with ZFHX3. Interacts with TBX21. Phosphorylated on tyrosine residues by SRC. Phosphorylated by LCK and FYN.

The protein localises to the nucleus. Its subcellular location is the cytoplasm. Forms the heterodimeric complex core-binding factor (CBF) with CBFB. RUNX members modulate the transcription of their target genes through recognizing the core consensus binding sequence 5'-TGTGGT-3', or very rarely, 5'-TGCGGT-3', within their regulatory regions via their runt domain, while CBFB is a non-DNA-binding regulatory subunit that allosterically enhances the sequence-specific DNA-binding capacity of RUNX. The heterodimers bind to the core site of a number of enhancers and promoters, including murine leukemia virus, polyomavirus enhancer, T-cell receptor enhancers, LCK, IL3 and GM-CSF promoters. May be involved in the control of cellular proliferation and/or differentiation. In association with ZFHX3, up-regulates CDKN1A promoter activity following TGF-beta stimulation. CBF complexes repress ZBTB7B transcription factor during cytotoxic (CD8+) T cell development. They bind to RUNX-binding sequence within the ZBTB7B locus acting as transcriptional silencer and allowing for cytotoxic T cell differentiation. CBF complexes binding to the transcriptional silencer is essential for recruitment of nuclear protein complexes that catalyze epigenetic modifications to establish epigenetic ZBTB7B silencing. Necessary for the development and survival of sensory neurons expressing parvalbumin. The polypeptide is Runt-related transcription factor 3 (Runx3) (Mus musculus (Mouse)).